The sequence spans 283 residues: Pantothenate synthetase 1 (283 aa).

30 to 37 contacts ATP; that stretch reads MGYLHDGH. The active-site Proton donor is histidine 37. Glutamine 61 lines the (R)-pantoate pocket. Position 61 (glutamine 61) interacts with beta-alanine. Residue 147-150 participates in ATP binding; it reads GQKD. Glutamine 153 is a (R)-pantoate binding site. ATP contacts are provided by residues valine 176 and 184–187; that span reads MSSR.

Belongs to the pantothenate synthetase family. Homodimer.

The protein resides in the cytoplasm. It catalyses the reaction (R)-pantoate + beta-alanine + ATP = (R)-pantothenate + AMP + diphosphate + H(+). It participates in cofactor biosynthesis; (R)-pantothenate biosynthesis; (R)-pantothenate from (R)-pantoate and beta-alanine: step 1/1. Functionally, catalyzes the condensation of pantoate with beta-alanine in an ATP-dependent reaction via a pantoyl-adenylate intermediate. This Bradyrhizobium diazoefficiens (strain JCM 10833 / BCRC 13528 / IAM 13628 / NBRC 14792 / USDA 110) protein is Pantothenate synthetase 1.